A 272-amino-acid polypeptide reads, in one-letter code: Protein UL11 (272 aa).

The N-terminal stretch at 1 to 31 is a signal peptide; the sequence is MLFRYITFHREKVLYLTAACIFGVYISLHDA. The Extracellular portion of the chain corresponds to 32–224; sequence CIPVVGKIGT…PLQPSPQHQH (193 aa). Asn42, Asn93, Asn100, and Asn142 each carry an N-linked (GlcNAc...) asparagine; by host glycan. Positions 142–200 are disordered; it reads NGTFPTTTTKKPTTTTRTTTTTTQRTTTTRTTTTAKKTTISTTHHKHPSPKKSTTPNSH. The segment covering 147–183 has biased composition (low complexity); the sequence is TTTTKKPTTTTRTTTTTTQRTTTTRTTTTAKKTTIST. Residues 225–245 form a helical membrane-spanning segment; that stretch reads LATHALWVLAVVIVIIIIIIF. The Cytoplasmic portion of the chain corresponds to 246-272; it reads YFRIPQKLWLLWQHDKHGIVLIPQTDL.

Belongs to the RL11 family. In terms of assembly, interacts with host PTPRC; this interaction affects T-cell signaling. In terms of processing, glycosylated.

It localises to the host cell membrane. The protein localises to the host endoplasmic reticulum. Its function is as follows. Plays a role in the modulation of host immune response by modulating T-cell function. Interacts with host PTPRC/CD45 and thereby reduces host TCR signaling and T-cell proliferation. The protein is Protein UL11 (UL11) of Human cytomegalovirus (strain Merlin) (HHV-5).